The primary structure comprises 225 residues: Small ribosomal subunit protein eS1 (225 aa).

Belongs to the eukaryotic ribosomal protein eS1 family.

The protein is Small ribosomal subunit protein eS1 of Methanococcus maripaludis (strain DSM 14266 / JCM 13030 / NBRC 101832 / S2 / LL).